The sequence spans 318 residues: tRNA-cytidine(32) 2-sulfurtransferase (318 aa).

Residues M1–N29 are disordered. Polar residues predominate over residues H16–Q27. The short motif at S64–S69 is the PP-loop motif element. [4Fe-4S] cluster-binding residues include C139, C142, and C230.

This sequence belongs to the TtcA family. Homodimer. The cofactor is Mg(2+). [4Fe-4S] cluster serves as cofactor.

It is found in the cytoplasm. The catalysed reaction is cytidine(32) in tRNA + S-sulfanyl-L-cysteinyl-[cysteine desulfurase] + AH2 + ATP = 2-thiocytidine(32) in tRNA + L-cysteinyl-[cysteine desulfurase] + A + AMP + diphosphate + H(+). It functions in the pathway tRNA modification. Catalyzes the ATP-dependent 2-thiolation of cytidine in position 32 of tRNA, to form 2-thiocytidine (s(2)C32). The sulfur atoms are provided by the cysteine/cysteine desulfurase (IscS) system. In Pseudoalteromonas atlantica (strain T6c / ATCC BAA-1087), this protein is tRNA-cytidine(32) 2-sulfurtransferase.